We begin with the raw amino-acid sequence, 494 residues long: Cytochrome P450 2A4 (494 aa).

Ser131 carries the phosphoserine modification. The residue at position 379 (Lys379) is an N6-acetyllysine. Cys439 contributes to the heme binding site.

The protein belongs to the cytochrome P450 family. Heme serves as cofactor. In terms of tissue distribution, kidney and lung. Expressed in liver, with a strong circadian rhythmicity. Circadian expression is regulated by DBP.

The protein resides in the endoplasmic reticulum membrane. The protein localises to the microsome membrane. It carries out the reaction an organic molecule + reduced [NADPH--hemoprotein reductase] + O2 = an alcohol + oxidized [NADPH--hemoprotein reductase] + H2O + H(+). Its function is as follows. Highly active in the 15-alpha-hydroxylation of testosterone. Also active in the 15-alpha-hydroxylation of progesterone and androstenedione. Little or no activity on corticosterone, pregnenolone, dehydroepiandrosterone, estradiol or estriol. In Mus musculus (Mouse), this protein is Cytochrome P450 2A4 (Cyp2a4).